We begin with the raw amino-acid sequence, 150 residues long: Galectin-1 (150 aa).

The Galectin domain occupies 9 to 141 (NQIKLQDDFK…FSSPVTVDIH (133 aa)). His-51, Arg-55, Asn-64, and Glu-75 together coordinate a carbohydrate.

Homotetramer. Oligomerization is required for carbohydrate binding. Most abundant in fruiting bodies. Very low levels of expression in asexual vegetative mycelia.

It is found in the secreted. The protein resides in the extracellular space. The protein localises to the extracellular matrix. Its subcellular location is the cell wall. It localises to the endomembrane system. Its function is as follows. Binds lactose. May play a role in fruiting body formation. In Coprinopsis cinerea (strain Okayama-7 / 130 / ATCC MYA-4618 / FGSC 9003) (Inky cap fungus), this protein is Galectin-1 (Cgl1).